Consider the following 110-residue polypeptide: Single-stranded DNA-binding protein 1 (110 aa).

The SSB domain maps to 1 to 104 (MNKILLIGRM…VVGEEVQFLE (104 aa)).

In terms of assembly, homotetramer.

The chain is Single-stranded DNA-binding protein 1 (ssb1) from Clostridium acetobutylicum (strain ATCC 824 / DSM 792 / JCM 1419 / IAM 19013 / LMG 5710 / NBRC 13948 / NRRL B-527 / VKM B-1787 / 2291 / W).